The sequence spans 396 residues: Elongation factor Tu (396 aa).

Positions 11–205 (KPHVNIGTIG…TIDEYIPTPV (195 aa)) constitute a tr-type G domain. Positions 20–27 (GHVDHGKT) are G1. 20–27 (GHVDHGKT) is a GTP binding site. Residue Thr-27 participates in Mg(2+) binding. Residues 61 to 65 (GITIN) form a G2 region. Residues 82–85 (DAPG) form a G3 region. GTP contacts are provided by residues 82–86 (DAPGH) and 137–140 (NKTD). Residues 137–140 (NKTD) form a G4 region. The G5 stretch occupies residues 175–177 (SAL).

It belongs to the TRAFAC class translation factor GTPase superfamily. Classic translation factor GTPase family. EF-Tu/EF-1A subfamily. As to quaternary structure, monomer.

It localises to the cytoplasm. It carries out the reaction GTP + H2O = GDP + phosphate + H(+). Functionally, GTP hydrolase that promotes the GTP-dependent binding of aminoacyl-tRNA to the A-site of ribosomes during protein biosynthesis. The sequence is that of Elongation factor Tu from Lacticaseibacillus casei (strain BL23) (Lactobacillus casei).